The following is a 252-amino-acid chain: Cell division protein ZapD (252 aa).

Belongs to the ZapD family. In terms of assembly, interacts with FtsZ.

It is found in the cytoplasm. In terms of biological role, cell division factor that enhances FtsZ-ring assembly. Directly interacts with FtsZ and promotes bundling of FtsZ protofilaments, with a reduction in FtsZ GTPase activity. In Ralstonia pickettii (strain 12J), this protein is Cell division protein ZapD.